A 66-amino-acid chain; its full sequence is Large ribosomal subunit protein bL35 (66 aa).

Residues 1-16 show a composition bias toward basic residues; that stretch reads MPKQKTHRASAKRFKR. The segment at 1–21 is disordered; the sequence is MPKQKTHRASAKRFKRTGNGG.

It belongs to the bacterial ribosomal protein bL35 family.

This Lactococcus lactis subsp. cremoris (strain MG1363) protein is Large ribosomal subunit protein bL35.